The following is a 648-amino-acid chain: Transcriptional regulator ManR (648 aa).

PRD domains are found at residues 187 to 292 and 297 to 404; these read KFLH…YPLQ and LENA…MQGS. A phosphohistidine; by HPr mark is found at H222, H281, H334, and H393. The region spanning 409–500 is the PTS EIIB type-2 domain; the sequence is KKAVIVCHMG…FIRQLGESHR (92 aa). Residue C415 is modified to Phosphocysteine; by EIIA. The 139-residue stretch at 510 to 648 folds into the PTS EIIA type-2 domain; it reads NNTTPFLVFL…VMTFLSHLDY (139 aa). H570 carries the phosphohistidine; by EIIB modification.

This sequence belongs to the transcriptional antiterminator BglG family.

It carries out the reaction D-mannose(out) + N(pros)-phospho-L-histidyl-[protein] = D-mannose 6-phosphate(in) + L-histidyl-[protein]. Its activity is regulated as follows. The regulatory activity of ManR is modulated by phosphorylation and dephosphorylation of the various ManR domains. It becomes activated via phosphoryl group transfer from PEP, EI and HPr on the two conserved histidine residues in the PRD 2 domain, whereas phosphorylation of the EIIA-like domain on His-570 by the PTS EIIB-Man domain of ManP inactivates ManR. In terms of biological role, positively regulates the expression of the mannose operon that consists of three genes, manP, manA, and yjdF, which are responsible for the transport and utilization of mannose. Also activates its own expression. This chain is Transcriptional regulator ManR (manR), found in Bacillus subtilis (strain 168).